The primary structure comprises 64 residues: Large ribosomal subunit protein bL35 (64 aa).

A compositionally biased stretch (basic residues) spans methionine 1–histidine 26. Positions methionine 1–arginine 42 are disordered.

The protein belongs to the bacterial ribosomal protein bL35 family.

This chain is Large ribosomal subunit protein bL35, found in Exiguobacterium sp. (strain ATCC BAA-1283 / AT1b).